We begin with the raw amino-acid sequence, 492 residues long: MISLSGLTSSVESDLDMQQAMLTNKDEKVLKALERTRQLDIPDEKTMPVLMKLLEEAGGNWSYIKLDNYTALVDAIYSVEDENKQSEGSSNGNRGKNLKVIDSPATLKKTYETRSASSGSSIQVVQKQPQLSNGDRKRKYKSRIADITKGSESVKIPLVDDVGSEAVPKFTYIPHNIVYQSAYLHVSLARISDEDCCANCKGNCLSADFPCTCARETSGEYAYTKEGLLKEKFLDTCLKMKKEPDSFPKVYCKDCPLERDHDKGTYGKCDGHLIRKFIKECWRKCGCDMQCGNRVVQRGIRCQLQVYFTQEGKGWGLRTLQDLPKGTFICEYIGEILTNTELYDRNVRSSSERHTYPVTLDADWGSEKDLKDEEALCLDATICGNVARFINHRCEDANMIDIPIEIETPDRHYYHIAFFTLRDVKAMDELTWDYMIDFNDKSHPVKAFRCCCGSESCRDRKIKGSQGKSIERRKIVSAKKQQGSKEVSKKRK.

Residues 112 to 138 (ETRSASSGSSIQVVQKQPQLSNGDRKR) form a disordered region. The segment covering 113-133 (TRSASSGSSIQVVQKQPQLSN) has biased composition (polar residues). The Zn(2+) site is built by C196, C197, C200, C204, C213, C281, C285, C287, and C291. Residues 196–299 (CCANCKGNCL…QCGNRVVQRG (104 aa)) enclose the Pre-SET domain. The SET domain occupies 302-435 (CQLQVYFTQE…AMDELTWDYM (134 aa)). S-adenosyl-L-methionine-binding positions include 313–315 (KGW) and 391–392 (NH). C394 contributes to the Zn(2+) binding site. Y434 provides a ligand contact to S-adenosyl-L-methionine. Residues 446-462 (KAFRCCCGSESCRDRKI) form the Post-SET domain. Positions 450, 452, and 457 each coordinate Zn(2+). The interval 463 to 492 (KGSQGKSIERRKIVSAKKQQGSKEVSKKRK) is disordered.

Belongs to the class V-like SAM-binding methyltransferase superfamily. Histone-lysine methyltransferase family. In terms of assembly, interacts with ubiquitin.

It is found in the nucleus. The protein localises to the chromosome. The catalysed reaction is N(6)-methyl-L-lysyl(9)-[histone H3] + S-adenosyl-L-methionine = N(6),N(6)-dimethyl-L-lysyl(9)-[histone H3] + S-adenosyl-L-homocysteine + H(+). It catalyses the reaction N(6),N(6)-dimethyl-L-lysyl(9)-[histone H3] + S-adenosyl-L-methionine = N(6),N(6),N(6)-trimethyl-L-lysyl(9)-[histone H3] + S-adenosyl-L-homocysteine + H(+). Functionally, histone methyltransferase that converts monomethylated 'Lys-9' of histone H3 (H3K9me1) to dimethylated 'Lys-9' (H3K9me2) in the absence of bound ubiquitin, and to trimethylated 'Lys-9' (H3K9me3) in the presence of bound ubiquitin. Acts in a locus-specific manner and contributes to the transcriptional silencing of pseudogenes and transposons. H3 'Lys-9' methylation represents a specific tag for epigenetic transcriptional repression. The sequence is that of Histone-lysine N-methyltransferase SUVR4 (SUVR4) from Arabidopsis thaliana (Mouse-ear cress).